A 181-amino-acid polypeptide reads, in one-letter code: Alkyl hydroperoxide reductase AhpD (181 aa).

Cys-131 (proton donor) is an active-site residue. Cysteines 131 and 134 form a disulfide. The active-site Cysteine sulfenic acid (-SOH) intermediate is Cys-134.

It belongs to the AhpD family.

The catalysed reaction is N(6)-[(R)-dihydrolipoyl]-L-lysyl-[lipoyl-carrier protein] + a hydroperoxide = N(6)-[(R)-lipoyl]-L-lysyl-[lipoyl-carrier protein] + an alcohol + H2O. In terms of biological role, antioxidant protein with alkyl hydroperoxidase activity. Required for the reduction of the AhpC active site cysteine residues and for the regeneration of the AhpC enzyme activity. The chain is Alkyl hydroperoxide reductase AhpD from Bradyrhizobium sp. (strain ORS 278).